The following is a 387-amino-acid chain: Acetylornithine aminotransferase (387 aa).

Pyridoxal 5'-phosphate-binding positions include Gly97–Thr98 and Phe130. A N(2)-acetyl-L-ornithine-binding site is contributed by Arg133. Residue Asp215–Gln218 participates in pyridoxal 5'-phosphate binding. Residue Lys244 is modified to N6-(pyridoxal phosphate)lysine. Residue Thr273 coordinates pyridoxal 5'-phosphate.

Belongs to the class-III pyridoxal-phosphate-dependent aminotransferase family. ArgD subfamily. As to quaternary structure, homodimer. Pyridoxal 5'-phosphate is required as a cofactor.

Its subcellular location is the cytoplasm. The catalysed reaction is N(2)-acetyl-L-ornithine + 2-oxoglutarate = N-acetyl-L-glutamate 5-semialdehyde + L-glutamate. Its pathway is amino-acid biosynthesis; L-arginine biosynthesis; N(2)-acetyl-L-ornithine from L-glutamate: step 4/4. The polypeptide is Acetylornithine aminotransferase (Clostridium acetobutylicum (strain ATCC 824 / DSM 792 / JCM 1419 / IAM 19013 / LMG 5710 / NBRC 13948 / NRRL B-527 / VKM B-1787 / 2291 / W)).